The following is a 477-amino-acid chain: Glutamate--tRNA ligase 2 (477 aa).

The 'HIGH' region signature appears at 12-22 (PSPTGRMHLGN). Residues Cys109, Cys111, Cys136, and His138 each contribute to the Zn(2+) site. Positions 253-257 (PLSKR) match the 'KMSKS' region motif. Lys256 is an ATP binding site.

Belongs to the class-I aminoacyl-tRNA synthetase family. Glutamate--tRNA ligase type 1 subfamily. Monomer. Requires Zn(2+) as cofactor.

It localises to the cytoplasm. It carries out the reaction tRNA(Glu) + L-glutamate + ATP = L-glutamyl-tRNA(Glu) + AMP + diphosphate. Its function is as follows. Catalyzes the attachment of glutamate to tRNA(Glu) in a two-step reaction: glutamate is first activated by ATP to form Glu-AMP and then transferred to the acceptor end of tRNA(Glu). The sequence is that of Glutamate--tRNA ligase 2 from Alkalilimnicola ehrlichii (strain ATCC BAA-1101 / DSM 17681 / MLHE-1).